Here is a 246-residue protein sequence, read N- to C-terminus: Probable septum site-determining protein MinC (246 aa).

It belongs to the MinC family. Interacts with MinD and FtsZ.

In terms of biological role, cell division inhibitor that blocks the formation of polar Z ring septums. Rapidly oscillates between the poles of the cell to destabilize FtsZ filaments that have formed before they mature into polar Z rings. Prevents FtsZ polymerization. This Lachnospira eligens (strain ATCC 27750 / DSM 3376 / VPI C15-48 / C15-B4) (Eubacterium eligens) protein is Probable septum site-determining protein MinC.